A 526-amino-acid polypeptide reads, in one-letter code: Radial spoke head protein 6 homolog A (526 aa).

Disordered stretches follow at residues 180–231 (EGED…EENG), 371–411 (VKSE…DAEI), and 469–526 (PPAP…EEDD). Acidic residues-rich tracts occupy residues 181-212 (GEDD…EAED) and 374-395 (EEEE…EPEP). The span at 497 to 506 (QALKAAKEEA) shows a compositional bias: basic and acidic residues. Positions 507–526 (EAAAEEMEEEEDEEEEEEDD) are enriched in acidic residues.

Belongs to the flagellar radial spoke RSP4/6 family. As to quaternary structure, component of sperm axonemal radial spoke complexes.

It localises to the cytoplasm. The protein localises to the cytoskeleton. Its subcellular location is the flagellum axoneme. Functions as part of radial spoke complexes in the axoneme of sperm flagella that play an important part in motility. The triple radial spokes (RS1, RS2 and RS3) are required to modulate beating of the sperm flagellum. The chain is Radial spoke head protein 6 homolog A (rsph6a) from Xenopus tropicalis (Western clawed frog).